A 72-amino-acid polypeptide reads, in one-letter code: Aurein-2.2 (72 aa).

An N-terminal signal peptide occupies residues 1 to 22 (MAFLKKSLFLVLFLGLVSLSIC). A propeptide spanning residues 23-49 (EKEKRQNEEDEDENEAANHEEGSEEKR) is cleaved from the precursor. A disordered region spans residues 27–47 (RQNEEDEDENEAANHEEGSEE). The segment covering 38 to 47 (AANHEEGSEE) has biased composition (basic and acidic residues). Leucine 65 is modified (leucine amide). Residues 69–72 (NDLE) constitute a propeptide that is removed on maturation.

Post-translationally, amidation is essential for antibacterial activity against Gram-positive bacteria. As to expression, expressed by the skin dorsal glands.

It localises to the secreted. It is found in the target cell membrane. Functionally, amphipathic alpha-helical antimicrobial peptide with weak to moderate activity against Gram-positive bacteria, and no activity against Gram-negative bacteria. Probably acts by disturbing membrane functions with its amphipathic structure. Strongly inhibits the formation of NO by neuronal nitric oxide synthase (nNOS) at micromolar concentrations. Acts by a non-competitive mechanism, probably by binding to calcium/calmodulin and as a consequence blocking calmodulin attachment to nNOS. The chain is Aurein-2.2 from Ranoidea aurea (Green and golden bell frog).